Consider the following 368-residue polypeptide: uncharacterized protein (368 aa).

2 disordered regions span residues 1 to 22 and 282 to 317; these read MEKSSNTTGSGGPKSDSQLPEK and KHLGRRSKKAQKRVEKMKKAYKESKEEKASSQEPPA. Over residues 293 to 311 the composition is skewed to basic and acidic residues; the sequence is KRVEKMKKAYKESKEEKAS.

This is an uncharacterized protein from Mus musculus (Mouse).